We begin with the raw amino-acid sequence, 160 residues long: Ribonuclease ARB_07070 (160 aa).

An N-terminal signal peptide occupies residues 1 to 18 (MVSFKAILTLSLIGAAFA). The interval 26–51 (AEPVEDSGAVANSPEGSGMDLGGTDP) is disordered. Glutamate 103 acts as the Proton acceptor in catalysis. Residue histidine 144 is the Proton donor of the active site.

It belongs to the ribonuclease U2 family.

The protein resides in the secreted. Functionally, this purine-specific ribonuclease cleaves 28S RNA in eukaryotic ribosomes, inhibits protein synthesis, and shows antitumor activity. This is Ribonuclease ARB_07070 from Arthroderma benhamiae (strain ATCC MYA-4681 / CBS 112371) (Trichophyton mentagrophytes).